Reading from the N-terminus, the 470-residue chain is tRNA (guanine(37)-N(1))-methyltransferase (470 aa).

S-adenosyl-L-methionine-binding positions include 304 to 305 (DL), 332 to 333 (DG), and Asn-370.

This sequence belongs to the class I-like SAM-binding methyltransferase superfamily. TRM5/TYW2 family. Monomer.

The protein resides in the mitochondrion matrix. It localises to the nucleus. It is found in the cytoplasm. It carries out the reaction guanosine(37) in tRNA + S-adenosyl-L-methionine = N(1)-methylguanosine(37) in tRNA + S-adenosyl-L-homocysteine + H(+). Specifically methylates the N1 position of guanosine-37 in various cytoplasmic and mitochondrial tRNAs. Methylation is not dependent on the nature of the nucleoside 5' of the target nucleoside. This is the first step in the biosynthesis of wybutosine (yW), a modified base adjacent to the anticodon of tRNAs and required for accurate decoding. This Theileria parva (East coast fever infection agent) protein is tRNA (guanine(37)-N(1))-methyltransferase.